The primary structure comprises 116 residues: Large ribosomal subunit protein bL19 (116 aa).

The protein belongs to the bacterial ribosomal protein bL19 family.

Its function is as follows. This protein is located at the 30S-50S ribosomal subunit interface and may play a role in the structure and function of the aminoacyl-tRNA binding site. This is Large ribosomal subunit protein bL19 (rplS) from Streptomyces lividans.